A 361-amino-acid chain; its full sequence is Ribosomal RNA large subunit methyltransferase M (361 aa).

Residues Ser187, 220–223 (CPGG), Asp239, Asp259, and Asp276 contribute to the S-adenosyl-L-methionine site. Lys305 acts as the Proton acceptor in catalysis.

The protein belongs to the class I-like SAM-binding methyltransferase superfamily. RNA methyltransferase RlmE family. RlmM subfamily. Monomer.

It is found in the cytoplasm. It carries out the reaction cytidine(2498) in 23S rRNA + S-adenosyl-L-methionine = 2'-O-methylcytidine(2498) in 23S rRNA + S-adenosyl-L-homocysteine + H(+). Catalyzes the 2'-O-methylation at nucleotide C2498 in 23S rRNA. The chain is Ribosomal RNA large subunit methyltransferase M from Shewanella sp. (strain W3-18-1).